The chain runs to 597 residues: Probable tyrosine-protein phosphatase (597 aa).

Residues Val55–Ala81 are compositionally biased toward low complexity. Disordered regions lie at residues Val55–Tyr89, Ser107–Leu172, and Ser188–Asn228. Residues Ser107 to Leu126 show a composition bias toward polar residues. Over residues Thr136 to Ser151 the composition is skewed to low complexity. Composition is skewed to polar residues over residues Ser188–Arg206 and Lys216–Asn228. One can recognise a Tyrosine-protein phosphatase domain in the interval Gly428–Asn579. The Phosphocysteine intermediate role is filled by Cys516.

It belongs to the protein-tyrosine phosphatase family. Non-receptor class dual specificity subfamily.

The enzyme catalyses O-phospho-L-tyrosyl-[protein] + H2O = L-tyrosyl-[protein] + phosphate. The sequence is that of Probable tyrosine-protein phosphatase (CPP1) from Candida albicans (strain WO-1) (Yeast).